We begin with the raw amino-acid sequence, 243 residues long: Ribosomal RNA small subunit methyltransferase G (243 aa).

S-adenosyl-L-methionine is bound by residues Gly82, Phe87, Ala133 to Glu134, and Arg152.

Belongs to the methyltransferase superfamily. RNA methyltransferase RsmG family.

It is found in the cytoplasm. In terms of biological role, specifically methylates the N7 position of a guanine in 16S rRNA. The polypeptide is Ribosomal RNA small subunit methyltransferase G (Clostridium novyi (strain NT)).